The chain runs to 392 residues: MPLNMNKYLTDAYTGGIIKKYPEDFIVEEITPEGIILEVGKSIEFKDEENWKGNYIHFTLEKRNWTTLDAIREIANRVGKQRKHFGFAGNKDKYAVTTQRVGCFNVKLEDLMKVKIKGIILRDFQKTNRKIRLGDLWGNRFTIRVREPELKGKELEEALNKLCKLKYFLNYYGVQRFGTTRPITHIVGRFIIERDWEGAFHAYCGTPLPYDDKKSKLARELVDEENFKEAYKKFPKAFFYERRMIKAYIETGSYQKAFMILPPYLRCMFINAYQSYLFNEIINRRFEYGFEPMEGDILIDNVPSGALFGYKTRFASGIQGEIEREIYERENLSPEDFKIGEFGSFIGDRRAMIGKIYNMKYWIEDDSYVLQFCLKKGNYATSVLREFIEKKD.

The active-site Nucleophile is aspartate 92. Residues 167–354 (YFLNYYGVQR…FIGDRRAMIG (188 aa)) form the TRUD domain.

This sequence belongs to the pseudouridine synthase TruD family.

The enzyme catalyses uridine(13) in tRNA = pseudouridine(13) in tRNA. Its function is as follows. Could be responsible for synthesis of pseudouridine from uracil-13 in transfer RNAs. The protein is Probable tRNA pseudouridine synthase D 1 of Methanocaldococcus jannaschii (strain ATCC 43067 / DSM 2661 / JAL-1 / JCM 10045 / NBRC 100440) (Methanococcus jannaschii).